Reading from the N-terminus, the 368-residue chain is Molybdenum import ATP-binding protein ModC (368 aa).

The ABC transporter domain maps to 1–231; that stretch reads MKGLQVAFKQ…QAMRPWQSFS (231 aa). 33-40 contributes to the ATP binding site; the sequence is GRSGAGKT. A Mop domain is found at 292-363; it reads KTSIRNIIEA…IKGVSVTQRD (72 aa).

The protein belongs to the ABC transporter superfamily. Molybdate importer (TC 3.A.1.8) family. As to quaternary structure, the complex is composed of two ATP-binding proteins (ModC), two transmembrane proteins (ModB) and a solute-binding protein (ModA).

The protein resides in the cell inner membrane. The catalysed reaction is molybdate(out) + ATP + H2O = molybdate(in) + ADP + phosphate + H(+). Its function is as follows. Part of the ABC transporter complex ModABC involved in molybdenum import. Responsible for energy coupling to the transport system. The polypeptide is Molybdenum import ATP-binding protein ModC (Vibrio vulnificus (strain YJ016)).